A 365-amino-acid chain; its full sequence is tRNA-specific 2-thiouridylase MnmA (365 aa).

ATP-binding positions include 6-13 (GMSGGVDS) and M32. Positions 92–94 (NPD) are interaction with target base in tRNA. C97 serves as the catalytic Nucleophile. A disulfide bridge links C97 with C197. G121 serves as a coordination point for ATP. The interaction with tRNA stretch occupies residues 147-149 (KDQ). Residue C197 is the Cysteine persulfide intermediate of the active site. The interval 315 to 316 (RY) is interaction with tRNA.

It belongs to the MnmA/TRMU family.

Its subcellular location is the cytoplasm. The catalysed reaction is S-sulfanyl-L-cysteinyl-[protein] + uridine(34) in tRNA + AH2 + ATP = 2-thiouridine(34) in tRNA + L-cysteinyl-[protein] + A + AMP + diphosphate + H(+). Catalyzes the 2-thiolation of uridine at the wobble position (U34) of tRNA, leading to the formation of s(2)U34. This chain is tRNA-specific 2-thiouridylase MnmA, found in Azoarcus sp. (strain BH72).